Reading from the N-terminus, the 835-residue chain is Ribonuclease R (835 aa).

The 327-residue stretch at R267 to I593 folds into the RNB domain. Residues G652–V733 enclose the S1 motif domain. The segment covering L739 to K754 has biased composition (basic and acidic residues). The interval L739 to Q835 is disordered. Basic residues predominate over residues R755–A764. The span at T765–A777 shows a compositional bias: low complexity. The span at P783–G793 shows a compositional bias: basic and acidic residues. Over residues K809–R829 the composition is skewed to basic residues.

The protein belongs to the RNR ribonuclease family. RNase R subfamily.

It localises to the cytoplasm. The catalysed reaction is Exonucleolytic cleavage in the 3'- to 5'-direction to yield nucleoside 5'-phosphates.. Its function is as follows. 3'-5' exoribonuclease that releases 5'-nucleoside monophosphates and is involved in maturation of structured RNAs. The sequence is that of Ribonuclease R from Vibrio parahaemolyticus serotype O3:K6 (strain RIMD 2210633).